Consider the following 166-residue polypeptide: Large ribosomal subunit protein uL10 (166 aa).

Belongs to the universal ribosomal protein uL10 family. As to quaternary structure, part of the ribosomal stalk of the 50S ribosomal subunit. The N-terminus interacts with L11 and the large rRNA to form the base of the stalk. The C-terminus forms an elongated spine to which L12 dimers bind in a sequential fashion forming a multimeric L10(L12)X complex.

In terms of biological role, forms part of the ribosomal stalk, playing a central role in the interaction of the ribosome with GTP-bound translation factors. This chain is Large ribosomal subunit protein uL10, found in Aromatoleum aromaticum (strain DSM 19018 / LMG 30748 / EbN1) (Azoarcus sp. (strain EbN1)).